The following is a 762-amino-acid chain: Phosphoribosylformylglycinamidine synthase subunit PurL (762 aa).

Histidine 58 is a catalytic residue. 2 residues coordinate ATP: tyrosine 61 and lysine 105. Mg(2+) is bound at residue glutamate 107. Residues 108–111 (SHNH) and arginine 130 contribute to the substrate site. The active-site Proton acceptor is the histidine 109. Position 131 (aspartate 131) interacts with Mg(2+). A substrate-binding site is contributed by glutamine 260. Residue aspartate 288 coordinates Mg(2+). 332–334 (ESQ) lines the substrate pocket. Residues asparagine 520 and glycine 557 each coordinate ATP. Asparagine 558 contacts Mg(2+). Residue serine 560 coordinates substrate.

This sequence belongs to the FGAMS family. In terms of assembly, monomer. Part of the FGAM synthase complex composed of 1 PurL, 1 PurQ and 2 PurS subunits.

The protein localises to the cytoplasm. It carries out the reaction N(2)-formyl-N(1)-(5-phospho-beta-D-ribosyl)glycinamide + L-glutamine + ATP + H2O = 2-formamido-N(1)-(5-O-phospho-beta-D-ribosyl)acetamidine + L-glutamate + ADP + phosphate + H(+). It participates in purine metabolism; IMP biosynthesis via de novo pathway; 5-amino-1-(5-phospho-D-ribosyl)imidazole from N(2)-formyl-N(1)-(5-phospho-D-ribosyl)glycinamide: step 1/2. Functionally, part of the phosphoribosylformylglycinamidine synthase complex involved in the purines biosynthetic pathway. Catalyzes the ATP-dependent conversion of formylglycinamide ribonucleotide (FGAR) and glutamine to yield formylglycinamidine ribonucleotide (FGAM) and glutamate. The FGAM synthase complex is composed of three subunits. PurQ produces an ammonia molecule by converting glutamine to glutamate. PurL transfers the ammonia molecule to FGAR to form FGAM in an ATP-dependent manner. PurS interacts with PurQ and PurL and is thought to assist in the transfer of the ammonia molecule from PurQ to PurL. This chain is Phosphoribosylformylglycinamidine synthase subunit PurL, found in Rhodococcus erythropolis (strain PR4 / NBRC 100887).